The chain runs to 261 residues: Carnitinyl-CoA dehydratase (261 aa).

The active-site Nucleophile is glutamate 111. Glutamate 131 (proton acceptor) is an active-site residue.

The protein belongs to the enoyl-CoA hydratase/isomerase family.

It carries out the reaction (R)-carnitinyl-CoA = crotonobetainyl-CoA + H2O. The protein operates within amine and polyamine metabolism; carnitine metabolism. Its function is as follows. Catalyzes the reversible dehydration of L-carnitinyl-CoA to crotonobetainyl-CoA. This chain is Carnitinyl-CoA dehydratase, found in Salmonella typhimurium (strain LT2 / SGSC1412 / ATCC 700720).